Consider the following 315-residue polypeptide: Melanoma-associated antigen 9 (315 aa).

Residues 1 to 13 (MSLEQRSPHCKPD) show a composition bias toward basic and acidic residues. The interval 1 to 67 (MSLEQRSPHC…PQSPQGGASS (67 aa)) is disordered. Low complexity predominate over residues 50 to 67 (SAAGSSSPPQSPQGGASS). The MAGE domain occupies 108–307 (LKLKVAELVH…ICYPSLYEEV (200 aa)).

In terms of tissue distribution, expressed in many tumors of several types, such as melanoma, head and neck squamous cell carcinoma, lung carcinoma and breast carcinoma, but not in normal tissues except for testes and placenta.

Functionally, not known, though may play a role in embryonal development and tumor transformation or aspects of tumor progression. This chain is Melanoma-associated antigen 9 (MAGEA9), found in Homo sapiens (Human).